Reading from the N-terminus, the 351-residue chain is Ribosomal RNA large subunit methyltransferase M (351 aa).

Residues S186, 219–222 (APGG), D238, D258, and D274 each bind S-adenosyl-L-methionine. The Proton acceptor role is filled by K303.

It belongs to the class I-like SAM-binding methyltransferase superfamily. RNA methyltransferase RlmE family. RlmM subfamily. As to quaternary structure, monomer.

The protein localises to the cytoplasm. It catalyses the reaction cytidine(2498) in 23S rRNA + S-adenosyl-L-methionine = 2'-O-methylcytidine(2498) in 23S rRNA + S-adenosyl-L-homocysteine + H(+). Catalyzes the 2'-O-methylation at nucleotide C2498 in 23S rRNA. The chain is Ribosomal RNA large subunit methyltransferase M from Xylella fastidiosa (strain M23).